The following is a 651-amino-acid chain: Kinesin-like protein KIF22-A (651 aa).

Residues 31-359 (RVRVAVRLRP…LNFAAKSKQI (329 aa)) enclose the Kinesin motor domain. ATP is bound at residue 116 to 123 (GPTGAGKT). The disordered stretch occupies residues 366–413 (QETTQTVVQPAMKRPREETGHIAGSQKRKKSKNDSTESSPNSSMDTAG). Positions 401 to 410 (TESSPNSSMD) are enriched in polar residues. Residues 452–498 (KRERMALLKKWEESQMEIERLKEKQKELEQKAMEAEARLEKSNNSDL) are a coiled coil. The Important for regulated proteolytic degradation motif lies at 561 to 564 (GLEN).

This sequence belongs to the TRAFAC class myosin-kinesin ATPase superfamily. Kinesin family. Post-translationally, ubiquitinated, leading to its subsequent proteasomal degradation.

The protein localises to the nucleus. The protein resides in the cytoplasm. It localises to the cytoskeleton. Its function is as follows. Kinesin family member that is involved in spindle formation and the movements of chromosomes during mitosis and meiosis. Binds to microtubules and to DNA. The chain is Kinesin-like protein KIF22-A (kif22-a) from Xenopus laevis (African clawed frog).